The chain runs to 193 residues: Imidazoleglycerol-phosphate dehydratase (193 aa).

It belongs to the imidazoleglycerol-phosphate dehydratase family.

The protein resides in the cytoplasm. The enzyme catalyses D-erythro-1-(imidazol-4-yl)glycerol 3-phosphate = 3-(imidazol-4-yl)-2-oxopropyl phosphate + H2O. It functions in the pathway amino-acid biosynthesis; L-histidine biosynthesis; L-histidine from 5-phospho-alpha-D-ribose 1-diphosphate: step 6/9. The protein is Imidazoleglycerol-phosphate dehydratase of Methanospirillum hungatei JF-1 (strain ATCC 27890 / DSM 864 / NBRC 100397 / JF-1).